The sequence spans 111 residues: Large ribosomal subunit protein uL22 (111 aa).

The protein belongs to the universal ribosomal protein uL22 family. In terms of assembly, part of the 50S ribosomal subunit.

This protein binds specifically to 23S rRNA; its binding is stimulated by other ribosomal proteins, e.g. L4, L17, and L20. It is important during the early stages of 50S assembly. It makes multiple contacts with different domains of the 23S rRNA in the assembled 50S subunit and ribosome. Functionally, the globular domain of the protein is located near the polypeptide exit tunnel on the outside of the subunit, while an extended beta-hairpin is found that lines the wall of the exit tunnel in the center of the 70S ribosome. The sequence is that of Large ribosomal subunit protein uL22 from Chlamydia trachomatis serovar L2b (strain UCH-1/proctitis).